Here is a 61-residue protein sequence, read N- to C-terminus: Small ribosomal subunit protein uS14 (61 aa).

The Zn(2+) site is built by Cys24, Cys27, Cys40, and Cys43.

It belongs to the universal ribosomal protein uS14 family. Zinc-binding uS14 subfamily. Part of the 30S ribosomal subunit. Contacts proteins S3 and S10. Zn(2+) serves as cofactor.

Its function is as follows. Binds 16S rRNA, required for the assembly of 30S particles and may also be responsible for determining the conformation of the 16S rRNA at the A site. The polypeptide is Small ribosomal subunit protein uS14 (Pelobacter propionicus (strain DSM 2379 / NBRC 103807 / OttBd1)).